The chain runs to 399 residues: Argininosuccinate synthase (399 aa).

An ATP-binding site is contributed by 8-16; the sequence is AYSGGLDTS. Residues tyrosine 87 and serine 92 each coordinate L-citrulline. Glycine 117 is an ATP binding site. L-aspartate is bound by residues threonine 119, asparagine 123, and aspartate 124. Residue asparagine 123 participates in L-citrulline binding. L-citrulline contacts are provided by arginine 127, serine 176, serine 185, glutamate 261, and tyrosine 273.

The protein belongs to the argininosuccinate synthase family. Type 1 subfamily. In terms of assembly, homotetramer.

It is found in the cytoplasm. The catalysed reaction is L-citrulline + L-aspartate + ATP = 2-(N(omega)-L-arginino)succinate + AMP + diphosphate + H(+). Its pathway is amino-acid biosynthesis; L-arginine biosynthesis; L-arginine from L-ornithine and carbamoyl phosphate: step 2/3. The polypeptide is Argininosuccinate synthase (Clostridioides difficile (strain 630) (Peptoclostridium difficile)).